A 122-amino-acid polypeptide reads, in one-letter code: uncharacterized protein (122 aa).

This is an uncharacterized protein from Escherichia coli (strain K12).